The chain runs to 322 residues: Zinc finger C2HC domain-containing protein zchc-1A (322 aa).

2 consecutive C2HC/C3H-type zinc fingers follow at residues 9 to 38 (PTFPCPICDRRFIKSSLEKHESACRKLASL) and 119 to 148 (DYVQCEYCSRNFNAAAAERHIPFCREQATR). 8 residues coordinate Zn(2+): Cys-13, Cys-16, His-28, Cys-32, Cys-123, Cys-126, His-138, and Cys-142. Positions 150–159 (QGGNLKSSGG) are enriched in polar residues. Positions 150-322 (QGGNLKSSGG…SRNNSRSRIF (173 aa)) are disordered. The segment covering 174-220 (NEGKKQESSSRNGSAERKPTTRGRDGSLLRARRDDSNDITSRRKSLD) has biased composition (basic and acidic residues). 2 stretches are compositionally biased toward polar residues: residues 221-238 (TRTSLTTGQASNRHTSLS) and 264-274 (LQQSSTPQQRL). Over residues 276-295 (TPASTTTTASRSGSRTSSRA) the composition is skewed to low complexity. Basic and acidic residues predominate over residues 296 to 305 (CPRDDSRDSR). Residues 311–322 (NNSRNNSRSRIF) are compositionally biased toward low complexity.

Belongs to the ZC2HC1 family. Requires Zn(2+) as cofactor.

The sequence is that of Zinc finger C2HC domain-containing protein zchc-1A from Caenorhabditis elegans.